A 101-amino-acid polypeptide reads, in one-letter code: Large ribosomal subunit protein eL43 (101 aa).

Zn(2+) is bound by residues Cys-40, Cys-43, Cys-59, and Cys-62. Residues 40–62 (CPSCRSLVRLERIAFGIWRCPKC) form a C4-type zinc finger.

Belongs to the eukaryotic ribosomal protein eL43 family. Putative zinc-binding subfamily. Part of the 50S ribosomal subunit. The cofactor is Zn(2+).

In terms of biological role, binds to the 23S rRNA. The chain is Large ribosomal subunit protein eL43 from Pyrobaculum aerophilum (strain ATCC 51768 / DSM 7523 / JCM 9630 / CIP 104966 / NBRC 100827 / IM2).